A 225-amino-acid chain; its full sequence is Large ribosomal subunit protein mL58 (225 aa).

A disordered region spans residues 106 to 138 (PQAPITTPESSSTDAAAADQHGDLPPVLYNPTK). Over residues 109–119 (PITTPESSSTD) the composition is skewed to polar residues.

This sequence belongs to the mitochondrion-specific ribosomal protein mL58 family. As to quaternary structure, component of the mitochondrial large ribosomal subunit (mt-LSU). Mature N.crassa 74S mitochondrial ribosomes consist of a small (37S) and a large (54S) subunit. The 37S small subunit contains a 16S ribosomal RNA (16S mt-rRNA) and 32 different proteins. The 54S large subunit contains a 23S rRNA (23S mt-rRNA) and 42 different proteins.

It is found in the mitochondrion. Its function is as follows. Component of the mitochondrial ribosome (mitoribosome), a dedicated translation machinery responsible for the synthesis of mitochondrial genome-encoded proteins, including at least some of the essential transmembrane subunits of the mitochondrial respiratory chain. The mitoribosomes are attached to the mitochondrial inner membrane and translation products are cotranslationally integrated into the membrane. This is Large ribosomal subunit protein mL58 (mrpl20) from Neurospora crassa (strain ATCC 24698 / 74-OR23-1A / CBS 708.71 / DSM 1257 / FGSC 987).